Consider the following 1005-residue polypeptide: Isoleucine--tRNA ligase (1005 aa).

Positions 70–80 (PYANGNIHIGH) match the 'HIGH' region motif. Glu629 is an L-isoleucyl-5'-AMP binding site. A 'KMSKS' region motif is present at residues 670 to 674 (KMSKS). ATP is bound at residue Lys673.

It belongs to the class-I aminoacyl-tRNA synthetase family. IleS type 1 subfamily. Monomer.

The protein resides in the cytoplasm. The enzyme catalyses tRNA(Ile) + L-isoleucine + ATP = L-isoleucyl-tRNA(Ile) + AMP + diphosphate. Catalyzes the attachment of isoleucine to tRNA(Ile). As IleRS can inadvertently accommodate and process structurally similar amino acids such as valine, to avoid such errors it has two additional distinct tRNA(Ile)-dependent editing activities. One activity is designated as 'pretransfer' editing and involves the hydrolysis of activated Val-AMP. The other activity is designated 'posttransfer' editing and involves deacylation of mischarged Val-tRNA(Ile). The polypeptide is Isoleucine--tRNA ligase (Rhodopseudomonas palustris (strain ATCC BAA-98 / CGA009)).